The following is a 67-amino-acid chain: MGEISITKLLVVAALVVLLFGTKKLRTLGGDLGTAIKGFKKAMNDEDAGVKKDVDGSVQAEKLSHKE.

The chain crosses the membrane as a helical span at residues 4–21 (ISITKLLVVAALVVLLFG).

This sequence belongs to the TatA/E family. TatE subfamily.

Its subcellular location is the cell inner membrane. Its function is as follows. Part of the twin-arginine translocation (Tat) system that transports large folded proteins containing a characteristic twin-arginine motif in their signal peptide across membranes. TatE shares overlapping functions with TatA. The polypeptide is Probable Sec-independent protein translocase protein TatE (Salmonella dublin (strain CT_02021853)).